The following is a 428-amino-acid chain: Glutamate--tRNA ligase 2 (428 aa).

The 'HIGH' region signature appears at 6–16 (PSPTGDMRTEQ).

This sequence belongs to the class-I aminoacyl-tRNA synthetase family. Glutamate--tRNA ligase type 1 subfamily. As to quaternary structure, monomer.

The protein localises to the cytoplasm. The enzyme catalyses tRNA(Glu) + L-glutamate + ATP = L-glutamyl-tRNA(Glu) + AMP + diphosphate. In terms of biological role, catalyzes the attachment of glutamate to tRNA(Glu) in a two-step reaction: glutamate is first activated by ATP to form Glu-AMP and then transferred to the acceptor end of tRNA(Glu). The polypeptide is Glutamate--tRNA ligase 2 (Sulfurovum sp. (strain NBC37-1)).